Reading from the N-terminus, the 413-residue chain is CinA-like protein (413 aa).

Belongs to the CinA family.

In Crocosphaera subtropica (strain ATCC 51142 / BH68) (Cyanothece sp. (strain ATCC 51142)), this protein is CinA-like protein.